A 544-amino-acid chain; its full sequence is Chaperonin GroEL 1 (544 aa).

ATP-binding positions include 29 to 32, 86 to 90, Gly413, and Asp495; these read TLGP and DGTTT. The tract at residues 525–544 is disordered; sequence PEPKTNTPASSGSGMSDYDY. Residues 528–538 are compositionally biased toward polar residues; that stretch reads KTNTPASSGSG.

The protein belongs to the chaperonin (HSP60) family. In terms of assembly, forms a cylinder of 14 subunits composed of two heptameric rings stacked back-to-back. Interacts with the co-chaperonin GroES.

It localises to the cytoplasm. It carries out the reaction ATP + H2O + a folded polypeptide = ADP + phosphate + an unfolded polypeptide.. Its function is as follows. Together with its co-chaperonin GroES, plays an essential role in assisting protein folding. The GroEL-GroES system forms a nano-cage that allows encapsulation of the non-native substrate proteins and provides a physical environment optimized to promote and accelerate protein folding. This Synechococcus sp. (strain JA-2-3B'a(2-13)) (Cyanobacteria bacterium Yellowstone B-Prime) protein is Chaperonin GroEL 1.